The primary structure comprises 380 residues: 4-hydroxy-3-methylbut-2-en-1-yl diphosphate synthase (flavodoxin) (380 aa).

[4Fe-4S] cluster contacts are provided by Cys-279, Cys-282, Cys-314, and Glu-321.

It belongs to the IspG family. Requires [4Fe-4S] cluster as cofactor.

The enzyme catalyses (2E)-4-hydroxy-3-methylbut-2-enyl diphosphate + oxidized [flavodoxin] + H2O + 2 H(+) = 2-C-methyl-D-erythritol 2,4-cyclic diphosphate + reduced [flavodoxin]. It participates in isoprenoid biosynthesis; isopentenyl diphosphate biosynthesis via DXP pathway; isopentenyl diphosphate from 1-deoxy-D-xylulose 5-phosphate: step 5/6. Functionally, converts 2C-methyl-D-erythritol 2,4-cyclodiphosphate (ME-2,4cPP) into 1-hydroxy-2-methyl-2-(E)-butenyl 4-diphosphate. The protein is 4-hydroxy-3-methylbut-2-en-1-yl diphosphate synthase (flavodoxin) of Tropheryma whipplei (strain TW08/27) (Whipple's bacillus).